Here is a 102-residue protein sequence, read N- to C-terminus: NADH-quinone oxidoreductase subunit K 2 (102 aa).

The next 3 membrane-spanning stretches (helical) occupy residues 6–26 (LEAF…GIIA), 30–50 (LVTV…ALVG), and 66–86 (FIIA…IAIF).

Belongs to the complex I subunit 4L family. As to quaternary structure, NDH-1 is composed of 14 different subunits. Subunits NuoA, H, J, K, L, M, N constitute the membrane sector of the complex.

Its subcellular location is the cell inner membrane. It catalyses the reaction a quinone + NADH + 5 H(+)(in) = a quinol + NAD(+) + 4 H(+)(out). NDH-1 shuttles electrons from NADH, via FMN and iron-sulfur (Fe-S) centers, to quinones in the respiratory chain. The immediate electron acceptor for the enzyme in this species is believed to be ubiquinone. Couples the redox reaction to proton translocation (for every two electrons transferred, four hydrogen ions are translocated across the cytoplasmic membrane), and thus conserves the redox energy in a proton gradient. In Aquifex aeolicus (strain VF5), this protein is NADH-quinone oxidoreductase subunit K 2.